We begin with the raw amino-acid sequence, 450 residues long: Mitochondrial distribution and morphology protein 10 (450 aa).

The protein belongs to the MDM10 family. Component of the ER-mitochondria encounter structure (ERMES) or MDM complex, composed of MMM1, MDM10, MDM12 and MDM34. Associates with the mitochondrial outer membrane sorting assembly machinery SAM(core) complex.

Its subcellular location is the mitochondrion outer membrane. Component of the ERMES/MDM complex, which serves as a molecular tether to connect the endoplasmic reticulum and mitochondria. Components of this complex are involved in the control of mitochondrial shape and protein biogenesis and may function in phospholipid exchange. MDM10 is involved in the late assembly steps of the general translocase of the mitochondrial outer membrane (TOM complex). Functions in the TOM40-specific route of the assembly of outer membrane beta-barrel proteins, including the association of TOM40 with the receptor TOM22 and small TOM proteins. Can associate with the SAM(core) complex as well as the MDM12-MMM1 complex, both involved in late steps of the major beta-barrel assembly pathway, that is responsible for biogenesis of all outer membrane beta-barrel proteins. May act as a switch that shuttles between both complexes and channels precursor proteins into the TOM40-specific pathway. Plays a role in mitochondrial morphology and in the inheritance of mitochondria. The chain is Mitochondrial distribution and morphology protein 10 from Paracoccidioides lutzii (strain ATCC MYA-826 / Pb01) (Paracoccidioides brasiliensis).